Reading from the N-terminus, the 232-residue chain is E3 ubiquitin-protein ligase RNF125 (232 aa).

Over residues 1 to 10 the composition is skewed to polar residues; the sequence is MGSVLSSDSG. The disordered stretch occupies residues 1–27; it reads MGSVLSSDSGKSAPPSATPRALERRGD. Residue Gly2 is the site of N-myristoyl glycine attachment. Positions 37 and 40 each coordinate Zn(2+). Residues 37-76 form an RING-type zinc finger; it reads CAVCLEVLHQPVRTRCGHVFCRSCIATSLKNNKWTCPYCR. Positions 43-45 are interaction with the C2HC RNF-type zinc finger; it reads VLH. 8 residues coordinate Zn(2+): Cys52, His54, Cys57, Cys60, Cys72, Cys75, Cys100, and Cys103. The segment at 100–119 adopts a C2HC RNF-type zinc-finger fold; the sequence is CAECDTLVCLGEMRAHIRTC. The interval 109-113 is interaction with the RING-type zinc finger; it reads LGEMR. Residues His115 and Cys119 each contribute to the Zn(2+) site. The interval 120–128 is linker region; that stretch reads QKYIDKYGP. The required for interaction with ubiquitin and for autoubiquitination stretch occupies residues 210 to 224; sequence EEALIRRVLDRSLLE.

In terms of assembly, interacts with UBE2D1. Interacts with VCP/p97; leading to recruit RNF125 to RIGI and promote ubiquitination of RIGI. In terms of processing, autoubiquitinated, leading to its subsequent proteasomal degradation.

The protein resides in the golgi apparatus membrane. The catalysed reaction is S-ubiquitinyl-[E2 ubiquitin-conjugating enzyme]-L-cysteine + [acceptor protein]-L-lysine = [E2 ubiquitin-conjugating enzyme]-L-cysteine + N(6)-ubiquitinyl-[acceptor protein]-L-lysine.. It participates in protein modification; protein ubiquitination. In terms of biological role, E3 ubiquitin-protein ligase that mediates ubiquitination and subsequent proteasomal degradation of target proteins, such as RIGI, MAVS/IPS1, IFIH1/MDA5, JAK1 and p53/TP53. Acts as a negative regulator of type I interferon production by mediating ubiquitination of RIGI at 'Lys-181', leading to RIGI degradation. Mediates ubiquitination and subsequent degradation of p53/TP53. Mediates ubiquitination and subsequent degradation of JAK1. Acts as a positive regulator of T-cell activation. This is E3 ubiquitin-protein ligase RNF125 (RNF125) from Macaca fascicularis (Crab-eating macaque).